Here is a 387-residue protein sequence, read N- to C-terminus: Succinate--CoA ligase [ADP-forming] subunit beta (387 aa).

The 236-residue stretch at 9–244 (KQLFASYGLP…VSQEDDRENR (236 aa)) folds into the ATP-grasp domain. ATP-binding positions include lysine 46, 53–55 (GRG), glutamate 99, cysteine 102, and glutamate 107. Residues asparagine 199 and aspartate 213 each contribute to the Mg(2+) site. Substrate is bound by residues asparagine 264 and 321-323 (GIV).

The protein belongs to the succinate/malate CoA ligase beta subunit family. In terms of assembly, heterotetramer of two alpha and two beta subunits. Mg(2+) serves as cofactor.

It catalyses the reaction succinate + ATP + CoA = succinyl-CoA + ADP + phosphate. It carries out the reaction GTP + succinate + CoA = succinyl-CoA + GDP + phosphate. The protein operates within carbohydrate metabolism; tricarboxylic acid cycle; succinate from succinyl-CoA (ligase route): step 1/1. Functionally, succinyl-CoA synthetase functions in the citric acid cycle (TCA), coupling the hydrolysis of succinyl-CoA to the synthesis of either ATP or GTP and thus represents the only step of substrate-level phosphorylation in the TCA. The beta subunit provides nucleotide specificity of the enzyme and binds the substrate succinate, while the binding sites for coenzyme A and phosphate are found in the alpha subunit. This Legionella pneumophila (strain Corby) protein is Succinate--CoA ligase [ADP-forming] subunit beta.